The following is a 409-amino-acid chain: Elongation factor Tu (409 aa).

In terms of domain architecture, tr-type G spans 10-214; sequence KPHVNIGTIG…AVDDNIPEPE (205 aa). The G1 stretch occupies residues 19-26; that stretch reads GHVDHGKT. Position 19–26 (19–26) interacts with GTP; that stretch reads GHVDHGKT. Position 26 (Thr26) interacts with Mg(2+). A G2 region spans residues 60 to 64; the sequence is GITIN. The G3 stretch occupies residues 81 to 84; it reads DCPG. Residues 81–85 and 136–139 each bind GTP; these read DCPGH and NKKD. Positions 136–139 are G4; that stretch reads NKKD. Residues 174–176 form a G5 region; sequence SAL.

The protein belongs to the TRAFAC class translation factor GTPase superfamily. Classic translation factor GTPase family. EF-Tu/EF-1A subfamily. Monomer.

It is found in the cytoplasm. The enzyme catalyses GTP + H2O = GDP + phosphate + H(+). Its function is as follows. GTP hydrolase that promotes the GTP-dependent binding of aminoacyl-tRNA to the A-site of ribosomes during protein biosynthesis. This chain is Elongation factor Tu, found in Crocosphaera subtropica (strain ATCC 51142 / BH68) (Cyanothece sp. (strain ATCC 51142)).